We begin with the raw amino-acid sequence, 609 residues long: MVSILSNIGMMVVTFKRPSLFTSLRRRSANNIIITKHSHPISTTRRSGNYKPTMWDFQFIQSLHNPYEGDKYMKRLNKLKKEVKKMMMTVEGSHDEELEKLELIDNLERLGVSYHFKDEIMQIMRSINININIAPPDSLYTTALKFRLLRQHGFHISQDILNDFKDENGNLKQSICKDTKDILNSSKDEHDNLKQSTCNNTKGLLKLYEASFLSIENESFLRNTTKSTLAHLMRYVDQNRCGEEDNMIVELVVHALELPRHWMVPRLETRWYISIYERMSNANPLLLELAKLDFNIVQATHQQDLRILSRWWKNTGLAEKLPFSRDILVENMFWAVGALFEPQHSYFRRLITKVIVFISIIDDIYDVYGTLDELELFTLAIQRWDTKAMEQLPDYMKVCYLALINIINEVAYEVLKNHDINVLPYLTKSWADLCKSYLQEAKWYHNGYKPNLEEYMDNARISIGVPMVLVHSLFLVTNQITKEALDSLTNYPDIIRWSATIFRLNDDLGTSSDELKRGDVSKSIQCYMNEKGASEEEAIEHIEFLIQETWEAMNTAQSKNSPLSETFIEVAKNITKASHFMYLHSDVKSSISKILFEPIIISNVAFALK.

Residues Met1–Ser42 constitute a chloroplast transit peptide. Residues Arg325, Asp362, Asp366, Arg503, and Asp506 each coordinate (2E)-geranyl diphosphate. Residues Asp362 and Asp366 each coordinate Mg(2+). A DDXXD motif motif is present at residues Asp362 to Asp366. Mg(2+) contacts are provided by Asp506, Thr510, and Glu514.

The protein belongs to the terpene synthase family. Tpsb subfamily. Mg(2+) is required as a cofactor. It depends on Mn(2+) as a cofactor. In terms of tissue distribution, highly expressed in young fruits and plant tops. Expressed in flower buds and trichomes of petioles and stems. Expressed at low levels in young leaves, stems, petioles, sepals and petals.

It is found in the plastid. The protein resides in the chloroplast. The enzyme catalyses (2E)-geranyl diphosphate + H2O = (R)-linalool + diphosphate. It catalyses the reaction (2E,6E)-farnesyl diphosphate + H2O = (6E)-nerolidol + diphosphate. It participates in secondary metabolite biosynthesis; terpenoid biosynthesis. Involved in monoterpene (C10) biosynthesis in glandular trichomes. Converts geranyl diphosphate to linalool in glandular trichomes in response to jasmonate (JA). Can convert farnesyl diphosphate to nerolidol in vitro. In Solanum lycopersicum (Tomato), this protein is (R)-linalool synthase TPS5, chloroplastic.